A 400-amino-acid polypeptide reads, in one-letter code: Acetate kinase (400 aa).

Mg(2+) is bound at residue Asn7. An ATP-binding site is contributed by Lys14. Arg92 serves as a coordination point for substrate. The active-site Proton donor/acceptor is the Asp149. Residues 209-213 (HLGNG), 283-285 (DAR), and 331-335 (GMGEN) contribute to the ATP site. Glu385 serves as a coordination point for Mg(2+).

This sequence belongs to the acetokinase family. In terms of assembly, homodimer. The cofactor is Mg(2+). Mn(2+) is required as a cofactor.

Its subcellular location is the cytoplasm. The enzyme catalyses acetate + ATP = acetyl phosphate + ADP. It participates in metabolic intermediate biosynthesis; acetyl-CoA biosynthesis; acetyl-CoA from acetate: step 1/2. Its function is as follows. Catalyzes the formation of acetyl phosphate from acetate and ATP. Can also catalyze the reverse reaction. This Helicobacter acinonychis (strain Sheeba) protein is Acetate kinase.